The chain runs to 614 residues: Chaperone protein HtpG (614 aa).

The segment at 1–324 (MSQIETKEFQ…SEELPLNISR (324 aa)) is a; substrate-binding. The tract at residues 325-537 (ETMQDSALIA…SHYGTHSMQR (213 aa)) is b. Residues 538 to 614 (MMQLMNRDLQ…LNEILEKALR (77 aa)) are c.

Belongs to the heat shock protein 90 family. As to quaternary structure, homodimer.

Its subcellular location is the cytoplasm. Its function is as follows. Molecular chaperone. Has ATPase activity. This is Chaperone protein HtpG from Desulfitobacterium hafniense (strain Y51).